Here is a 359-residue protein sequence, read N- to C-terminus: 3-dehydroquinate synthase (359 aa).

NAD(+)-binding positions include 71 to 76 (DGEQFK), 105 to 109 (GVIGD), 129 to 130 (TT), Lys-142, Lys-151, and 169 to 172 (CLQT). Zn(2+)-binding residues include Glu-184, His-247, and His-264.

The protein belongs to the sugar phosphate cyclases superfamily. Dehydroquinate synthase family. The cofactor is Co(2+). It depends on Zn(2+) as a cofactor. NAD(+) is required as a cofactor.

The protein localises to the cytoplasm. It catalyses the reaction 7-phospho-2-dehydro-3-deoxy-D-arabino-heptonate = 3-dehydroquinate + phosphate. Its pathway is metabolic intermediate biosynthesis; chorismate biosynthesis; chorismate from D-erythrose 4-phosphate and phosphoenolpyruvate: step 2/7. Its function is as follows. Catalyzes the conversion of 3-deoxy-D-arabino-heptulosonate 7-phosphate (DAHP) to dehydroquinate (DHQ). The protein is 3-dehydroquinate synthase of Shewanella sp. (strain MR-4).